Consider the following 946-residue polypeptide: Villin-4 (946 aa).

4 Gelsolin-like repeats span residues 28-109 (NFKP…ETEK), 152-219 (VHVK…EDGK), 274-339 (LEHE…TIMF), and 641-715 (EIHH…PQFF). Disordered stretches follow at residues 744–789 (ATPS…GRSP), 801–832 (PSTR…SSKQ), and 844–902 (GPTK…PAPD). The span at 765–777 (QDKSQQRTRSMSH) shows a compositional bias: polar residues. The span at 874–883 (SENEPEDDEN) shows a compositional bias: acidic residues. One can recognise an HP domain in the interval 881 to 946 (DENSTIYPYE…NRLKSDLQLF (66 aa)).

The protein belongs to the villin/gelsolin family.

It localises to the cytoplasm. The protein localises to the cytoskeleton. Ca(2+)-regulated actin-binding protein. Binds actin microfilaments (MFs). Involved in actin filament bundling, severing and capping. Caps the barbed end of actin filaments and is able to sever them in a calcium-dependent manner. This chain is Villin-4, found in Oryza sativa subsp. japonica (Rice).